The sequence spans 465 residues: Methylenetetrahydrofolate--tRNA-(uracil-5-)-methyltransferase TrmFO (465 aa).

10-15 (GAGLAG) provides a ligand contact to FAD.

It belongs to the MnmG family. TrmFO subfamily. FAD serves as cofactor.

Its subcellular location is the cytoplasm. It catalyses the reaction uridine(54) in tRNA + (6R)-5,10-methylene-5,6,7,8-tetrahydrofolate + NADH + H(+) = 5-methyluridine(54) in tRNA + (6S)-5,6,7,8-tetrahydrofolate + NAD(+). The catalysed reaction is uridine(54) in tRNA + (6R)-5,10-methylene-5,6,7,8-tetrahydrofolate + NADPH + H(+) = 5-methyluridine(54) in tRNA + (6S)-5,6,7,8-tetrahydrofolate + NADP(+). Catalyzes the folate-dependent formation of 5-methyl-uridine at position 54 (M-5-U54) in all tRNAs. In Deinococcus radiodurans (strain ATCC 13939 / DSM 20539 / JCM 16871 / CCUG 27074 / LMG 4051 / NBRC 15346 / NCIMB 9279 / VKM B-1422 / R1), this protein is Methylenetetrahydrofolate--tRNA-(uracil-5-)-methyltransferase TrmFO.